The sequence spans 272 residues: Tryptophan synthase alpha chain (272 aa).

Residues Glu-49 and Glu-60 each act as proton acceptor in the active site.

The protein belongs to the TrpA family. In terms of assembly, tetramer of two alpha and two beta chains.

The catalysed reaction is (1S,2R)-1-C-(indol-3-yl)glycerol 3-phosphate + L-serine = D-glyceraldehyde 3-phosphate + L-tryptophan + H2O. The protein operates within amino-acid biosynthesis; L-tryptophan biosynthesis; L-tryptophan from chorismate: step 5/5. In terms of biological role, the alpha subunit is responsible for the aldol cleavage of indoleglycerol phosphate to indole and glyceraldehyde 3-phosphate. The sequence is that of Tryptophan synthase alpha chain from Legionella pneumophila (strain Corby).